The following is a 161-amino-acid chain: Bacterioferritin (161 aa).

Residues 1 to 145 enclose the Ferritin-like diiron domain; that stretch reads MKGDAKVIEF…TQISLYDRLG (145 aa). Fe cation contacts are provided by Glu18 and Glu51. Met52 serves as a coordination point for heme b. Fe cation-binding residues include His54, Glu94, Glu127, and His130.

The protein belongs to the bacterioferritin family. As to quaternary structure, homooligomer of 24 subunits, arranged as 12 dimers, that are packed together to form an approximately spherical molecule with a central cavity, in which large amounts of iron can be deposited. It depends on heme b as a cofactor.

It carries out the reaction 4 Fe(2+) + O2 + 4 H(+) = 4 Fe(3+) + 2 H2O. The enzyme catalyses Fe(2+)(in) = Fe(2+)(out). Functionally, iron-storage protein, whose ferroxidase center binds Fe(2+), oxidizes it using dioxygen to Fe(3+), and participates in the subsequent Fe(3+) oxide mineral core formation within the central cavity of the BFR protein shell. The polypeptide is Bacterioferritin (bfr) (Rhodobacter capsulatus (Rhodopseudomonas capsulata)).